The chain runs to 202 residues: Imidazoleglycerol-phosphate dehydratase (202 aa).

This sequence belongs to the imidazoleglycerol-phosphate dehydratase family.

The protein resides in the cytoplasm. It carries out the reaction D-erythro-1-(imidazol-4-yl)glycerol 3-phosphate = 3-(imidazol-4-yl)-2-oxopropyl phosphate + H2O. It participates in amino-acid biosynthesis; L-histidine biosynthesis; L-histidine from 5-phospho-alpha-D-ribose 1-diphosphate: step 6/9. In Chelativorans sp. (strain BNC1), this protein is Imidazoleglycerol-phosphate dehydratase.